A 132-amino-acid chain; its full sequence is Small ribosomal subunit protein uS8 (132 aa).

Belongs to the universal ribosomal protein uS8 family. As to quaternary structure, part of the 30S ribosomal subunit. Contacts proteins S5 and S12.

Its function is as follows. One of the primary rRNA binding proteins, it binds directly to 16S rRNA central domain where it helps coordinate assembly of the platform of the 30S subunit. The protein is Small ribosomal subunit protein uS8 of Cereibacter sphaeroides (strain ATCC 17029 / ATH 2.4.9) (Rhodobacter sphaeroides).